A 240-amino-acid chain; its full sequence is Sugar fermentation stimulation protein homolog (240 aa).

The protein belongs to the SfsA family.

This is Sugar fermentation stimulation protein homolog from Crocosphaera subtropica (strain ATCC 51142 / BH68) (Cyanothece sp. (strain ATCC 51142)).